The sequence spans 424 residues: Testican-2 (424 aa).

The signal sequence occupies residues 1–22 (MRAPGCGRLVLPLLLLAAAALA). At S72 the chain carries Phosphoserine; by FAM20C. Disulfide bonds link C90–C101, C95–C111, C136–C166, C139–C159, and C148–C180. The Kazal-like domain occupies 130–182 (GNKDSICKPCHMAQLASVCGSDGHTYSSVCKLEQQACLSSKQLAVRCEGPCPC). An N-linked (GlcNAc...) asparagine glycan is attached at N225. The Thyroglobulin type-1 domain occupies 310-376 (KPPCLAELER…GTRTHGSPDC (67 aa)). Disulfide bonds link C313–C337, C348–C355, and C357–C376. O-linked (Xyl...) (glycosaminoglycan) serine glycosylation is found at S383 and S388. Residues 387-424 (GSGVGWEDEEEKETEEAGEEAEEEEGEAGEADDGGYIW) are disordered. The segment covering 392-424 (WEDEEEKETEEAGEEAEEEEGEAGEADDGGYIW) has biased composition (acidic residues).

Post-translationally, contains chondroitin sulfate and heparan sulfate O-linked oligosaccharides. Highly expressed in brain. Also found in lung and testis.

It is found in the secreted. The protein localises to the extracellular space. Its subcellular location is the extracellular matrix. Functionally, may participate in diverse steps of neurogenesis. Binds calcium. The sequence is that of Testican-2 (SPOCK2) from Homo sapiens (Human).